Here is a 335-residue protein sequence, read N- to C-terminus: Anthranilate phosphoribosyltransferase (335 aa).

Residues Gly79, 82–83 (GD), Ser87, 89–92 (NIST), 107–115 (KHGNRSITS), and Ser119 each bind 5-phospho-alpha-D-ribose 1-diphosphate. Gly79 provides a ligand contact to anthranilate. Position 91 (Ser91) interacts with Mg(2+). Residue Asn110 participates in anthranilate binding. An anthranilate-binding site is contributed by Arg165. Mg(2+)-binding residues include Asp224 and Glu225.

Belongs to the anthranilate phosphoribosyltransferase family. As to quaternary structure, homodimer. The cofactor is Mg(2+).

It catalyses the reaction N-(5-phospho-beta-D-ribosyl)anthranilate + diphosphate = 5-phospho-alpha-D-ribose 1-diphosphate + anthranilate. It functions in the pathway amino-acid biosynthesis; L-tryptophan biosynthesis; L-tryptophan from chorismate: step 2/5. Its function is as follows. Catalyzes the transfer of the phosphoribosyl group of 5-phosphorylribose-1-pyrophosphate (PRPP) to anthranilate to yield N-(5'-phosphoribosyl)-anthranilate (PRA). The protein is Anthranilate phosphoribosyltransferase of Lactococcus lactis subsp. cremoris (strain MG1363).